The sequence spans 520 residues: Sensory neuron membrane protein 1 (520 aa).

Residues 1–5 (MKPKK) lie on the Cytoplasmic side of the membrane. The chain crosses the membrane as a helical span at residues 6 to 26 (LGIIGGSLLAFGILICAIAFP). Topologically, residues 27–451 (PFLRSQVKKQ…KLKTVFKTIS (425 aa)) are extracellular. N-linked (GlcNAc...) asparagine glycosylation is found at Asn64, Asn224, and Asn268. 3 disulfides stabilise this stretch: Cys264/Cys329, Cys293/Cys348, and Cys331/Cys337. A helical transmembrane segment spans residues 452–472 (IVGFMKWFTIVSGTCVSGAAA). The Cytoplasmic portion of the chain corresponds to 473–520 (ALFFKNKDKNKLDITKVTPQKGEEKKWPNQMTISTIQSAAVPPNLDAD).

Belongs to the CD36 family.

Its subcellular location is the cell membrane. Functionally, plays an olfactory role that is not restricted to pheromone sensitivity. The protein is Sensory neuron membrane protein 1 of Apis mellifera (Honeybee).